Here is a 206-residue protein sequence, read N- to C-terminus: Crossover junction endodeoxyribonuclease RuvC (206 aa).

Residues Asp-7, Glu-67, and Asp-138 contribute to the active site. Positions 7, 67, and 138 each coordinate Mg(2+).

The protein belongs to the RuvC family. Homodimer which binds Holliday junction (HJ) DNA. The HJ becomes 2-fold symmetrical on binding to RuvC with unstacked arms; it has a different conformation from HJ DNA in complex with RuvA. In the full resolvosome a probable DNA-RuvA(4)-RuvB(12)-RuvC(2) complex forms which resolves the HJ. It depends on Mg(2+) as a cofactor.

Its subcellular location is the cytoplasm. It carries out the reaction Endonucleolytic cleavage at a junction such as a reciprocal single-stranded crossover between two homologous DNA duplexes (Holliday junction).. The RuvA-RuvB-RuvC complex processes Holliday junction (HJ) DNA during genetic recombination and DNA repair. Endonuclease that resolves HJ intermediates. Cleaves cruciform DNA by making single-stranded nicks across the HJ at symmetrical positions within the homologous arms, yielding a 5'-phosphate and a 3'-hydroxyl group; requires a central core of homology in the junction. The consensus cleavage sequence is 5'-(A/T)TT(C/G)-3'. Cleavage occurs on the 3'-side of the TT dinucleotide at the point of strand exchange. HJ branch migration catalyzed by RuvA-RuvB allows RuvC to scan DNA until it finds its consensus sequence, where it cleaves and resolves the cruciform DNA. The polypeptide is Crossover junction endodeoxyribonuclease RuvC (Anaeromyxobacter sp. (strain Fw109-5)).